Consider the following 358-residue polypeptide: Snurportin-1 (358 aa).

M1 carries the N-acetylmethionine modification. Disordered regions lie at residues 1-26 and 69-90; these read MEELSQALASSFSVSQELNSTAAPHP and DWTGMESGEEENKKDEEEMDID. Residues 1-65 are necessary for interaction with KPNB1 and m3G-cap U1 and U5 snRNP import receptor activity; sequence MEELSQALAS…LDYVNHARRL (65 aa). Positions 1-160 are necessary for interaction with XPO1; it reads MEELSQALAS…NRFSSLLPGG (160 aa). Over residues 7–22 the composition is skewed to polar residues; the sequence is ALASSFSVSQELNSTA. The IBB domain maps to 11–73; sequence SFSVSQELNS…RLAEDDWTGM (63 aa). Position 75 is a phosphoserine (S75). The tract at residues 128 to 130 is interaction with m3G-cap structure; that stretch reads GKR. Positions 210-329 are necessary for binding to the m3G-cap structure; it reads MHSKLPEEEG…DTKEKLTHKA (120 aa). Basic and acidic residues predominate over residues 315-341; that stretch reads KRSQEDTKEKLTHKASENGHYELEHLS. Positions 315–358 are disordered; it reads KRSQEDTKEKLTHKASENGHYELEHLSTPKLRNPPHSSESLMDN. Over residues 349–358 the composition is skewed to polar residues; it reads PHSSESLMDN. Position 351 is a phosphoserine (S351).

It belongs to the snurportin family. Component of an import snRNP complex composed of KPNB1, SNUPN, SMN1 and ZNF259. Component of a nuclear export receptor complex composed of KPNB1, Ran, SNUPN and XPO1. Found in a trimeric export complex with SNUPN, Ran and XPO1. Interacts (via IBB domain) with KPNB1; the interaction is direct. Interacts with DDX20, IPO7, SMN1, SNRPB and XPO1. Interacts directly with XPO1. Its interaction with XPO1 and binding to m3G-cap U snRNPs appears to be mutually exclusive. Can form homomers.

Its subcellular location is the nucleus. It is found in the cytoplasm. Its function is as follows. Functions as an U snRNP-specific nuclear import adapter. Involved in the trimethylguanosine (m3G)-cap-dependent nuclear import of U snRNPs. Binds specifically to the terminal m3G-cap U snRNAs. The sequence is that of Snurportin-1 (Snupn) from Mus musculus (Mouse).